The chain runs to 509 residues: Membrane-bound lytic murein transglycosylase F (509 aa).

The first 40 residues, 1–40, serve as a signal peptide directing secretion; that stretch reads MLASACTHSWRTGRFLNRIIKSSVQTLTAAALIANLSACS. A non-LT domain region spans residues 41–280; sequence RPTTLEKIEQ…YLQERYFGHV (240 aa). An LT domain region spans residues 281 to 509; that stretch reads NQLNYVGART…APFRVTPPML (229 aa). The active site involves glutamate 327. The segment at 474–500 is disordered; sequence DGSVAQNEDAPTTGADGTTEETPAIPA.

This sequence in the N-terminal section; belongs to the bacterial solute-binding protein 3 family. It in the C-terminal section; belongs to the transglycosylase Slt family.

The protein localises to the cell outer membrane. The catalysed reaction is Exolytic cleavage of the (1-&gt;4)-beta-glycosidic linkage between N-acetylmuramic acid (MurNAc) and N-acetylglucosamine (GlcNAc) residues in peptidoglycan, from either the reducing or the non-reducing ends of the peptidoglycan chains, with concomitant formation of a 1,6-anhydrobond in the MurNAc residue.. In terms of biological role, murein-degrading enzyme that degrades murein glycan strands and insoluble, high-molecular weight murein sacculi, with the concomitant formation of a 1,6-anhydromuramoyl product. Lytic transglycosylases (LTs) play an integral role in the metabolism of the peptidoglycan (PG) sacculus. Their lytic action creates space within the PG sacculus to allow for its expansion as well as for the insertion of various structures such as secretion systems and flagella. This is Membrane-bound lytic murein transglycosylase F from Hahella chejuensis (strain KCTC 2396).